Here is a 418-residue protein sequence, read N- to C-terminus: MASQNITPSPTASSDSVFAHLVRAPEDPILGVTVAYNKDPSPIKLNLGVGAYRTEEGKPLVLDVVRRVERQLLNDMSRNKEYIPIVGLADFNKLSAKLIFGADSPAIQENRVTTVQGLSGTGSLRVGGEFLAKHYHQRIIYLPTPTWGNHTKVFNLAGLTVKTYRYYAPATRGLDFQGLLEDLGSAPSGSVVLLHACAHNPTGVDPTLEQWEQIRQLIRSKSLLPFFDSAYQGFASGSLDADAQPVRLFVADGGELLVAQSYAKNMGLYGERVGALSIVSKSADVSSRVESQLKLVIRPMYSSPPIHGASIVAAILKDRDLYNDWTIELKAMADRIINMRQQLFDALRARGTPGDWSHIIKQIGMFTFTGLNPEQVSILTKEYHIYLTSDGRISMAGLSSKTVPHLAHAIHAVVTRVA.

At K264 the chain carries N6-(pyridoxal phosphate)lysine.

It belongs to the class-I pyridoxal-phosphate-dependent aminotransferase family. In terms of assembly, homodimer. It depends on pyridoxal 5'-phosphate as a cofactor. Nodules, roots, stems and leaves, in decreasing order of aspartate aminotransferase 1 concentration. Is the predominant aspartate aminotransferase isoenzyme in roots.

The protein resides in the cytoplasm. The enzyme catalyses L-aspartate + 2-oxoglutarate = oxaloacetate + L-glutamate. In terms of biological role, important for the metabolism of amino acids and Krebs-cycle related organic acids. In plants, it is involved in nitrogen metabolism and in aspects of carbon and energy metabolism. In Medicago sativa (Alfalfa), this protein is Aspartate aminotransferase 1 (AAT-1).